The primary structure comprises 529 residues: UDP-glucuronosyltransferase 2B28 (529 aa).

Positions methionine 1–glycine 24 are cleaved as a signal peptide. At lysine 135 the chain carries N6-succinyllysine. Residue asparagine 315 is glycosylated (N-linked (GlcNAc...) asparagine). A helical transmembrane segment spans residues glycine 495–tryptophan 517.

This sequence belongs to the UDP-glycosyltransferase family. In terms of tissue distribution, expressed in the liver, breast and kidney.

The protein resides in the endoplasmic reticulum membrane. It is found in the cytoplasm. The protein localises to the perinuclear region. It carries out the reaction glucuronate acceptor + UDP-alpha-D-glucuronate = acceptor beta-D-glucuronoside + UDP + H(+). Its function is as follows. UDP-glucuronosyltransferase (UGT) that catalyzes phase II biotransformation reactions in which lipophilic substrates are conjugated with glucuronic acid to increase the metabolite's water solubility, thereby facilitating excretion into either the urine or bile. Essential for the elimination and detoxification of drugs, xenobiotics and endogenous compounds. Catalyzes the glucuronidation of endogenous steroid hormones such as androgens (androsterone, 3alpha-androstanediol) and estrogens (estradiol, estrone). Catalyzes the glucuronidation of bile acid substrates, which are natural detergents for dietary lipids absorption. Displays glucuronidation activity toward the phenolic compounds eugenol. Lack UDP-glucuronosyltransferase (UGT) activity. In Homo sapiens (Human), this protein is UDP-glucuronosyltransferase 2B28.